We begin with the raw amino-acid sequence, 218 residues long: 3,4-dihydroxy-2-butanone 4-phosphate synthase (218 aa).

Residues 38 to 39 (RE), D43, 151 to 155 (RRGHT), and E175 each bind D-ribulose 5-phosphate. E39 serves as a coordination point for Mg(2+). H154 serves as a coordination point for Mg(2+).

It belongs to the DHBP synthase family. In terms of assembly, homodimer. Mg(2+) serves as cofactor. Mn(2+) is required as a cofactor.

It catalyses the reaction D-ribulose 5-phosphate = (2S)-2-hydroxy-3-oxobutyl phosphate + formate + H(+). Its pathway is cofactor biosynthesis; riboflavin biosynthesis; 2-hydroxy-3-oxobutyl phosphate from D-ribulose 5-phosphate: step 1/1. Catalyzes the conversion of D-ribulose 5-phosphate to formate and 3,4-dihydroxy-2-butanone 4-phosphate. This chain is 3,4-dihydroxy-2-butanone 4-phosphate synthase, found in Shewanella frigidimarina (strain NCIMB 400).